The sequence spans 570 residues: MALLAAATLNPTTHLSIRSRAGHNSENLWLRSAASSQKSKGRFCNLTVRAGTPSKPAEPIGPVFTKLKPWQIPKRDWFDKDFLFGASTSAYQIEGAWNEDGKGPSTWDHFCHTYPERISDRTNGDVAANSYHLYEEDVKALKDMGMKVYRFSISWSRILPNGTGKPNQKGIDYYNNLINSLIHHGIVPYVTIWHWDTPQALEDKYGGFLNRQIVNDYKHFAKVCFESFGDRVKNWFTFNEPHTYCCFSYGEGIHAPGRCSPGMDCAVPEGDSLREPYTAGHHILLAHAEAVELFKAHYNEHGDSKIGMAFDVMGYEPYQDSFLDDQARERSIDYNLGWFLEPVVRGDYPFSMRSLIGDRLPMFTKEEQEKLASSCDIMGLNYYTSRFSKHVDISSDFTPKLNTDDAYASSETKGSDGNDIGPITGTYWIYMYPKGLTDLLLIMKEKYGNPPIFITENGIADVDSDPTMTDPLDDWKRLDYLQRHISAVKDAIDQGADVRGHFTWGLIDNFEWSLGYSSRFGLVYIDKKDGNKRKLKKSAKWFAKFNSVPKALLKTTNTNNKPAVTASVSL.

A chloroplast-targeting transit peptide spans 1 to 50; it reads MALLAAATLNPTTHLSIRSRAGHNSENLWLRSAASSQKSKGRFCNLTVRA. A beta-D-glucoside contacts are provided by residues Gln-92, His-194, and 239-240; that span reads NE. Residue Glu-240 is the Proton donor of the active site. A disulfide bridge connects residues Cys-259 and Cys-265. Residues Tyr-383, Glu-456, Trp-504, 511–512, and Phe-520 contribute to the a beta-D-glucoside site; that span reads EW. Glu-456 functions as the Nucleophile in the catalytic mechanism.

The protein belongs to the glycosyl hydrolase 1 family. In terms of assembly, homo- and heterohexamers. Expressed in young seedlings early after germination.

The protein resides in the plastid. It localises to the chloroplast. The catalysed reaction is Hydrolysis of terminal, non-reducing beta-D-glucosyl residues with release of beta-D-glucose.. It catalyses the reaction DIMBOA beta-D-glucoside + H2O = DIMBOA + D-glucose. The enzyme catalyses DIBOA beta-D-glucoside + H2O = DIBOA + D-glucose. Its function is as follows. Acts in defense of young plant parts against pests via the production of hydroxamic acids from hydroxamic acid glucosides. Enzymatic activity is highly correlated with plant growth. The preferred substrate is DIMBOA-beta-D-glucoside. This chain is 4-hydroxy-7-methoxy-3-oxo-3,4-dihydro-2H-1,4-benzoxazin-2-yl glucoside beta-D-glucosidase 1c, chloroplastic (GLU1C), found in Triticum aestivum (Wheat).